The chain runs to 327 residues: Phenylalanine--tRNA ligase alpha subunit (327 aa).

E252 provides a ligand contact to Mg(2+).

The protein belongs to the class-II aminoacyl-tRNA synthetase family. Phe-tRNA synthetase alpha subunit type 1 subfamily. As to quaternary structure, tetramer of two alpha and two beta subunits. It depends on Mg(2+) as a cofactor.

It localises to the cytoplasm. The enzyme catalyses tRNA(Phe) + L-phenylalanine + ATP = L-phenylalanyl-tRNA(Phe) + AMP + diphosphate + H(+). This is Phenylalanine--tRNA ligase alpha subunit from Erwinia tasmaniensis (strain DSM 17950 / CFBP 7177 / CIP 109463 / NCPPB 4357 / Et1/99).